The following is a 366-amino-acid chain: Succinyl-diaminopimelate desuccinylase (366 aa).

Histidine 66 contacts Zn(2+). Aspartate 68 is a catalytic residue. Aspartate 97 lines the Zn(2+) pocket. Residue glutamate 127 is the Proton acceptor of the active site. Positions 128, 156, and 341 each coordinate Zn(2+).

It belongs to the peptidase M20A family. DapE subfamily. As to quaternary structure, homodimer. Requires Zn(2+) as cofactor. It depends on Co(2+) as a cofactor.

It carries out the reaction N-succinyl-(2S,6S)-2,6-diaminopimelate + H2O = (2S,6S)-2,6-diaminopimelate + succinate. Its pathway is amino-acid biosynthesis; L-lysine biosynthesis via DAP pathway; LL-2,6-diaminopimelate from (S)-tetrahydrodipicolinate (succinylase route): step 3/3. Catalyzes the hydrolysis of N-succinyl-L,L-diaminopimelic acid (SDAP), forming succinate and LL-2,6-diaminopimelate (DAP), an intermediate involved in the bacterial biosynthesis of lysine and meso-diaminopimelic acid, an essential component of bacterial cell walls. The chain is Succinyl-diaminopimelate desuccinylase from Aliarcobacter butzleri (strain RM4018) (Arcobacter butzleri).